Here is a 217-residue protein sequence, read N- to C-terminus: Cytidylate kinase (217 aa).

9 to 17 (GPSSSGKSS) contributes to the ATP binding site.

Belongs to the cytidylate kinase family. Type 1 subfamily.

The protein localises to the cytoplasm. The catalysed reaction is CMP + ATP = CDP + ADP. It catalyses the reaction dCMP + ATP = dCDP + ADP. In Mycoplasma pneumoniae (strain ATCC 29342 / M129 / Subtype 1) (Mycoplasmoides pneumoniae), this protein is Cytidylate kinase.